A 668-amino-acid chain; its full sequence is Nuclear pore complex protein Nup75 (668 aa).

The protein belongs to the nucleoporin Nup85 family. Component of the nuclear pore complex (NPC). Component of the NPC Nup107-160 subcomplex.

It is found in the nucleus. The protein localises to the nuclear pore complex. It localises to the nucleus membrane. Functionally, component of the nuclear pore complex (NPC) that seems to be required for NPC assembly and maintenance. Required for nuclear import of phosphorylated Mad via importin msk. Has no role in classical nuclear localization signal (cNLS)-dependent nuclear import via importin-beta. Facilitates the interaction between Nup93 and sec13 with msk. This is Nuclear pore complex protein Nup75 from Drosophila melanogaster (Fruit fly).